The sequence spans 359 residues: Protein trichome birefringence-like 42 (359 aa).

The helical; Signal-anchor for type II membrane protein transmembrane segment at 7 to 25 (LFLLLLIFLVDLSDYGVLA) threads the bilayer. A GDS motif motif is present at residues 110 to 112 (GDS). A DCXHWCLPGXXDXWN motif motif is present at residues 335–349 (DCSHWCLPGVPDAWN).

Belongs to the PC-esterase family. TBL subfamily.

It localises to the membrane. May act as a bridging protein that binds pectin and other cell wall polysaccharides. Probably involved in maintaining esterification of pectins. May be involved in the specific O-acetylation of cell wall polymers. The protein is Protein trichome birefringence-like 42 (TBL42) of Arabidopsis thaliana (Mouse-ear cress).